The primary structure comprises 298 residues: Protein DR_1172 (298 aa).

3 LEA-like repeats span residues 48–117 (DAAQ…NVGQ), 128–197 (DQAK…DVAQ), and 201–270 (QGAQ…AGKQ). Residues 174 to 193 (VQDVKADASKAADQAKDKAQ) are compositionally biased toward basic and acidic residues. The segment at 174–298 (VQDVKADASK…MTGNTNTRKN (125 aa)) is disordered. A compositionally biased stretch (low complexity) spans 194–208 (DVAQNVKQGAQQAAS). A compositionally biased stretch (basic and acidic residues) spans 209–233 (DAKDKVQDVKADASRAADQAKDKAQ). Residues 275–298 (GSTTNNAGTAGNTGMTGNTNTRKN) are compositionally biased toward low complexity.

The protein belongs to the LEA type 1 family.

This Deinococcus radiodurans (strain ATCC 13939 / DSM 20539 / JCM 16871 / CCUG 27074 / LMG 4051 / NBRC 15346 / NCIMB 9279 / VKM B-1422 / R1) protein is Protein DR_1172.